Reading from the N-terminus, the 660-residue chain is RalBP1-associated Eps domain-containing protein 2 (660 aa).

The 114-residue stretch at 34-147 folds into the EH 1 domain; the sequence is EQQCYSELFA…RFMMSKNDGE (114 aa). The tract at residues 169–208 is disordered; that stretch reads EKNSFKRMDDEDKQQETQSPTMSPLASPPSSPPHYQRVPL. The residue at position 254 (serine 254) is a Phosphoserine. The EH 2 domain occupies 282–373; it reads QREYYVNQFR…LQPEYLQAAF (92 aa). In terms of domain architecture, EF-hand spans 315-350; the sequence is LSIPELSYIWELSDADCDGALTLPEFCAAFHLIVAR. Positions 328, 330, 332, and 339 each coordinate Ca(2+). The tract at residues 433-616 is disordered; that stretch reads NEALPKDVSE…KQKKAIQTAI (184 aa). Residue threonine 479 is modified to Phosphothreonine. Serine 493 is modified (phosphoserine). Residues 512 to 523 show a composition bias toward pro residues; sequence LPPPPALPPRPC. The interval 514 to 660 is interaction with RALBP1; it reads PPPALPPRPC…LEQLRPVTVL (147 aa). Residues 561 to 660 are interaction with ASAP1; sequence PPSKPIRRKF…LEQLRPVTVL (100 aa). The span at 582–594 shows a compositional bias: low complexity; the sequence is PSTAASGPASAAT. Positions 601–657 form a coiled coil; sequence VQKQSSKQKKAIQTAIRKNKEANAVLARLNSELQQQLKEVHQERIALENQLEQLRPV.

In terms of assembly, interacts with EPN1; the interaction is direct. Interacts with EPS15; the interaction is direct. Interacts with EPS15L1. Interacts with RALBP1; can form a ternary complex with activated Ral (RALA or RALB). Interacts with ASAP1; the interaction is direct and this complex can bind paxillin. Also forms a ternary complex with RALBP1 and ASAP1. Interacts with GRB2. Post-translationally, tyrosine-phosphorylated upon stimulation of cells with EGF. Phosphorylation on Tyr-residues induces its association with the EGF receptor probably indirectly through an adapter like GRB2. Expressed at high levels in the cerebrum, cerebellum, lung, kidney, and testis. Weakly expressed in the kidney. Isoform 2 is down-regulated during progression of prostate cancer.

The protein localises to the cytoplasm. Involved in ligand-dependent receptor mediated endocytosis of the EGF and insulin receptors as part of the Ral signaling pathway. By controlling growth factor receptors endocytosis may regulate cell survival. Through ASAP1 may regulate cell adhesion and migration. This is RalBP1-associated Eps domain-containing protein 2 (REPS2) from Homo sapiens (Human).